The primary structure comprises 617 residues: Dihydroxy-acid dehydratase (617 aa).

Position 81 (aspartate 81) interacts with Mg(2+). Cysteine 122 contributes to the [2Fe-2S] cluster binding site. 2 residues coordinate Mg(2+): aspartate 123 and lysine 124. The residue at position 124 (lysine 124) is an N6-carboxylysine. [2Fe-2S] cluster is bound at residue cysteine 195. Glutamate 492 contributes to the Mg(2+) binding site. The active-site Proton acceptor is the serine 518.

It belongs to the IlvD/Edd family. As to quaternary structure, homodimer. Requires [2Fe-2S] cluster as cofactor. The cofactor is Mg(2+).

It catalyses the reaction (2R)-2,3-dihydroxy-3-methylbutanoate = 3-methyl-2-oxobutanoate + H2O. The catalysed reaction is (2R,3R)-2,3-dihydroxy-3-methylpentanoate = (S)-3-methyl-2-oxopentanoate + H2O. Its pathway is amino-acid biosynthesis; L-isoleucine biosynthesis; L-isoleucine from 2-oxobutanoate: step 3/4. It functions in the pathway amino-acid biosynthesis; L-valine biosynthesis; L-valine from pyruvate: step 3/4. Its function is as follows. Functions in the biosynthesis of branched-chain amino acids. Catalyzes the dehydration of (2R,3R)-2,3-dihydroxy-3-methylpentanoate (2,3-dihydroxy-3-methylvalerate) into 2-oxo-3-methylpentanoate (2-oxo-3-methylvalerate) and of (2R)-2,3-dihydroxy-3-methylbutanoate (2,3-dihydroxyisovalerate) into 2-oxo-3-methylbutanoate (2-oxoisovalerate), the penultimate precursor to L-isoleucine and L-valine, respectively. The protein is Dihydroxy-acid dehydratase of Azorhizobium caulinodans (strain ATCC 43989 / DSM 5975 / JCM 20966 / LMG 6465 / NBRC 14845 / NCIMB 13405 / ORS 571).